The primary structure comprises 238 residues: Serine protease SplA (238 aa).

The N-terminal stretch at Met1–Ala38 is a signal peptide. Active-site charge relay system residues include His77, Asp116, and Ser192.

The protein belongs to the peptidase S1B family.

It localises to the secreted. The protein is Serine protease SplA (splA) of Staphylococcus aureus (strain COL).